Consider the following 1412-residue polypeptide: DNA-directed RNA polymerase subunit beta' (1412 aa).

Residues aspartate 543, aspartate 545, and aspartate 547 each coordinate Mg(2+). Zn(2+) is bound by residues cysteine 1017, cysteine 1092, cysteine 1099, and cysteine 1102.

The protein belongs to the RNA polymerase beta' chain family. In terms of assembly, the RNAP catalytic core consists of 2 alpha, 1 beta, 1 beta' and 1 omega subunit. When a sigma factor is associated with the core the holoenzyme is formed, which can initiate transcription. It depends on Mg(2+) as a cofactor. Zn(2+) serves as cofactor.

The enzyme catalyses RNA(n) + a ribonucleoside 5'-triphosphate = RNA(n+1) + diphosphate. Its function is as follows. DNA-dependent RNA polymerase catalyzes the transcription of DNA into RNA using the four ribonucleoside triphosphates as substrates. In Mesomycoplasma hyopneumoniae (strain 7448) (Mycoplasma hyopneumoniae), this protein is DNA-directed RNA polymerase subunit beta'.